The chain runs to 143 residues: Large ribosomal subunit protein uL13 (143 aa).

It belongs to the universal ribosomal protein uL13 family. As to quaternary structure, part of the 50S ribosomal subunit.

In terms of biological role, this protein is one of the early assembly proteins of the 50S ribosomal subunit, although it is not seen to bind rRNA by itself. It is important during the early stages of 50S assembly. This Caldanaerobacter subterraneus subsp. tengcongensis (strain DSM 15242 / JCM 11007 / NBRC 100824 / MB4) (Thermoanaerobacter tengcongensis) protein is Large ribosomal subunit protein uL13.